Reading from the N-terminus, the 613-residue chain is Zinc finger protein 665 (613 aa).

18 C2H2-type zinc fingers span residues 113-135 (YKCD…KRIH), 141-163 (YRCN…QVIH), 169-191 (YKCN…QRIH), 197-219 (YKCN…QVIH), 225-247 (YKCN…RRIH), 253-275 (YKCN…QTIH), 281-303 (YKCN…RRVH), 309-331 (YKCN…QIIH), 337-359 (FKCN…RRIH), 365-387 (YRCD…QAIH), 393-415 (YKCN…RGIH), 421-443 (YKCD…WRVH), 449-471 (YKCN…QTIH), 477-499 (YKCN…QRIH), 505-527 (YKCN…QVIH), 533-555 (YKCN…RRIH), 561-583 (YRCN…MAIH), and 589-611 (YKCN…RRIH).

Belongs to the krueppel C2H2-type zinc-finger protein family.

The protein localises to the nucleus. May be involved in transcriptional regulation. In Pongo abelii (Sumatran orangutan), this protein is Zinc finger protein 665 (ZNF665).